A 429-amino-acid chain; its full sequence is Z-DNA-binding protein 1 (429 aa).

Z-binding domains lie at 8–70 and 103–166; these read PGRE…CLGG and PQFS…TIYR. The tract at residues 68–107 is disordered; the sequence is LGGTDPEGEGPAELALSSPAERPQQHAATIPETPGPQFSQ. Short sequence motifs (RIP homotypic interaction motif (RHIM)) lie at residues 195 to 219 and 253 to 277; these read NSWI…RQTV and DIHM…LHGV. Disordered regions lie at residues 277–299 and 339–429; these read VPSE…AAGP and KMSI…GGGI. Over residues 347 to 358 the composition is skewed to gly residues; sequence AGPGGVAGSGEG. Over residues 407-420 the composition is skewed to basic and acidic residues; it reads KAAEGSHYVDEASH.

As to quaternary structure, homodimer. Interacts (via RIP homotypic interaction motif) with RIPK3; leading to RIPK3 activation and necroptosis; interaction is enhanced by CASP6. Interacts (via RIP homotypic interaction motif) with RIPK1. Component of the AIM2 PANoptosome complex, a multiprotein complex that drives inflammatory cell death (PANoptosis). (Microbial infection) Interacts (via RIP homotypic interaction motif/RHIM) with herpes simplex virus 1/HHV-1 protein RIR1/ICP6 (via RHIM); this interaction may induce heteromeric amyloid assemblies and prevent necroptosis activation. Interacts with human herpes simplex virus 1/HHV-1 protein ICP0. Post-translationally, phosphorylated. As to expression, highly expressed in lymphatic tissues including lymph node, leukocytes, tonsil, bone marrow and spleen. Expressed to a lesser extent in thymus, lung and liver.

The protein localises to the cytoplasm. Its subcellular location is the nucleus. With respect to regulation, ZBP1-dependent necroptosis is normally inhibited by RIPK1: RIPK1 inhibits the ZBP1-induced activation of RIPK3 via FADD-mediated recruitment of CASP8, which cleaves RIPK1 and limits TNF-induced necroptosis. In terms of biological role, key innate sensor that recognizes and binds Z-RNA structures, which are produced by a number of viruses, such as herpesvirus, orthomyxovirus or flavivirus, and triggers different forms of cell death. ZBP1 acts as an essential mediator of pyroptosis, necroptosis and apoptosis (PANoptosis), an integral part of host defense against pathogens, by activating RIPK3, caspase-8 (CASP8), and the NLRP3 inflammasome. Key activator of necroptosis, a programmed cell death process in response to death-inducing TNF-alpha family members, via its ability to bind Z-RNA: once activated upon Z-RNA-binding, ZBP1 interacts and stimulates RIPK3 kinase, which phosphorylates and activates MLKL, triggering execution of programmed necrosis. In addition to TNF-induced necroptosis, necroptosis can also take place in the nucleus in response to orthomyxoviruses infection: ZBP1 recognizes and binds Z-RNA structures that are produced in infected nuclei by orthomyxoviruses, such as the influenza A virus (IAV), leading to ZBP1 activation, RIPK3 stimulation and subsequent MLKL phosphorylation, triggering disruption of the nuclear envelope and leakage of cellular DNA into the cytosol. ZBP1-dependent cell death in response to IAV infection promotes interleukin-1 alpha (IL1A) induction in an NLRP3-inflammasome-independent manner: IL1A expression is required for the optimal interleukin-1 beta (IL1B) production, and together, these cytokines promote infiltration of inflammatory neutrophils to the lung, leading to the formation of neutrophil extracellular traps. In addition to its direct role in driving necroptosis via its ability to sense Z-RNAs, also involved in PANoptosis triggered in response to bacterial infection: component of the AIM2 PANoptosome complex, a multiprotein complex that triggers PANoptosis. Also acts as the apical sensor of fungal infection responsible for activating PANoptosis. Involved in CASP8-mediated cell death via its interaction with RIPK1 but independently of its ability to sense Z-RNAs. In some cell types, also able to restrict viral replication by promoting cell death-independent responses. In response to Zika virus infection in neurons, promotes a cell death-independent pathway that restricts viral replication: together with RIPK3, promotes a death-independent transcriptional program that modifies the cellular metabolism via up-regulation expression of the enzyme ACOD1/IRG1 and production of the metabolite itaconate. Itaconate inhibits the activity of succinate dehydrogenase, generating a metabolic state in neurons that suppresses replication of viral genomes. (Microbial infection) In case of herpes simplex virus 1/HHV-1 infection, forms hetero-amyloid structures with HHV-1 protein RIR1/ICP6 which may inhibit ZBP1-mediated necroptosis, thereby preventing host cell death pathway and allowing viral evasion. This chain is Z-DNA-binding protein 1, found in Homo sapiens (Human).